Consider the following 138-residue polypeptide: Small ribosomal subunit protein uS11 (138 aa).

Over residues 1-12 the composition is skewed to low complexity; that stretch reads MAQAKKGGTAAK. Disordered regions lie at residues 1 to 32 and 119 to 138; these read MAQAKKGGTAAKKGQKTRRREKKNVPHGAAHI and ISDVTPQPHNGCRPPKRRRV. Positions 13 to 22 are enriched in basic residues; it reads KGQKTRRREK.

This sequence belongs to the universal ribosomal protein uS11 family. Part of the 30S ribosomal subunit. Interacts with proteins S7 and S18. Binds to IF-3.

Functionally, located on the platform of the 30S subunit, it bridges several disparate RNA helices of the 16S rRNA. Forms part of the Shine-Dalgarno cleft in the 70S ribosome. The polypeptide is Small ribosomal subunit protein uS11 (Mycolicibacterium smegmatis (strain ATCC 700084 / mc(2)155) (Mycobacterium smegmatis)).